The chain runs to 236 residues: Phosphoribosylaminoimidazole-succinocarboxamide synthase (236 aa).

It belongs to the SAICAR synthetase family.

It carries out the reaction 5-amino-1-(5-phospho-D-ribosyl)imidazole-4-carboxylate + L-aspartate + ATP = (2S)-2-[5-amino-1-(5-phospho-beta-D-ribosyl)imidazole-4-carboxamido]succinate + ADP + phosphate + 2 H(+). Its pathway is purine metabolism; IMP biosynthesis via de novo pathway; 5-amino-1-(5-phospho-D-ribosyl)imidazole-4-carboxamide from 5-amino-1-(5-phospho-D-ribosyl)imidazole-4-carboxylate: step 1/2. The chain is Phosphoribosylaminoimidazole-succinocarboxamide synthase from Cellvibrio japonicus (strain Ueda107) (Pseudomonas fluorescens subsp. cellulosa).